We begin with the raw amino-acid sequence, 538 residues long: Reticuline oxidase (538 aa).

Residues 1-23 form the signal peptide; it reads MENKTPIFFSLSIFLSLLNCALG. A disulfide bond links Cys30 and Cys89. A glycan (N-linked (GlcNAc...) asparagine) is linked at Asn38. Residues 67–241 form the FAD-binding PCMH-type domain; it reads LISKPSAIIL…YAWKIKLLPV (175 aa). The segment at residues 104–166 is a cross-link (6-(S-cysteinyl)-8alpha-(pros-histidyl)-FAD (His-Cys)); that stretch reads HSYEGLSYTS…SKLGFTAGWC (63 aa). 2 N-linked (GlcNAc...) asparagine glycosylation sites follow: Asn423 and Asn471.

Belongs to the oxygen-dependent FAD-linked oxidoreductase family. The cofactor is FAD. A metal cation is required as a cofactor. Post-translationally, the FAD cofactor is bound via a bicovalent 6-S-cysteinyl, 8alpha-N1-histidyl FAD linkage.

The protein resides in the cytoplasmic vesicle. The enzyme catalyses (S)-reticuline + O2 = (S)-scoulerine + H2O2 + H(+). Its pathway is alkaloid biosynthesis; (S)-scoulerine biosynthesis; (S)-scoulerine from (S)-reticuline: step 1/1. In terms of biological role, essential to the formation of benzophenanthridine alkaloids in the response of plants to pathogenic attack. Catalyzes the stereospecific conversion of the N-methyl moiety of (S)-reticuline into the berberine bridge carbon of (S)-scoulerine. This chain is Reticuline oxidase (BBE1), found in Eschscholzia californica (California poppy).